Here is a 162-residue protein sequence, read N- to C-terminus: Cytochrome c-type biogenesis protein CcmE (162 aa).

The Cytoplasmic segment spans residues 1–8 (MNPVRKKR). The chain crosses the membrane as a helical; Signal-anchor for type II membrane protein span at residues 9–29 (LIIVLAIVAGVGAAVGLALSA). At 30-162 (LQQNINLFYT…GETSYNQEGK (133 aa)) the chain is on the periplasmic side. Residues His124 and Tyr128 each coordinate heme. The span at 139–148 (DSGQLKHYEN) shows a compositional bias: basic and acidic residues. Residues 139 to 162 (DSGQLKHYENGKAAGETSYNQEGK) form a disordered region.

The protein belongs to the CcmE/CycJ family.

It is found in the cell inner membrane. In terms of biological role, heme chaperone required for the biogenesis of c-type cytochromes. Transiently binds heme delivered by CcmC and transfers the heme to apo-cytochromes in a process facilitated by CcmF and CcmH. In Pseudomonas aeruginosa (strain ATCC 15692 / DSM 22644 / CIP 104116 / JCM 14847 / LMG 12228 / 1C / PRS 101 / PAO1), this protein is Cytochrome c-type biogenesis protein CcmE.